We begin with the raw amino-acid sequence, 188 residues long: Mitochondrial import receptor subunit TOM20-1 (188 aa).

Topologically, residues 1-164 (MDKLNFFEEI…VVKNKKSSDE (164 aa)) are cytoplasmic. Residues 165 to 182 (KYIVMGWVILAIGVVACI) traverse the membrane as a helical segment. Residues 183–188 (SFRKLR) are Mitochondrial intermembrane-facing.

Belongs to the Tom20 family. In terms of assembly, forms part of the preprotein translocase complex of the outer mitochondrial membrane (TOM complex) which consists of at least 6 different proteins (TOM5, TOM6, TOM7, TOM20, TOM22/TOM9 and TOM40). Component of a mitochondrial large protein complex that contains, at least, MIC60, DGS1, TOM40, TOM20 proteins, and petC/RISP. In terms of tissue distribution, barely detected in roots.

Its subcellular location is the mitochondrion outer membrane. Functionally, central component of the receptor complex responsible for the recognition and translocation of cytosolically synthesized mitochondrial preproteins. Together with TOM22 functions as the transit peptide receptor at the surface of the mitochondrion outer membrane and facilitates the movement of preproteins into the translocation pore. This chain is Mitochondrial import receptor subunit TOM20-1, found in Arabidopsis thaliana (Mouse-ear cress).